The chain runs to 397 residues: Purine ribonucleoside efflux pump NepI (397 aa).

Over 1–21 (MNENIAEKFRADGVARPNWSA) the chain is Cytoplasmic. Residues 22–42 (VFAVAFCVACLITVEFLPVSL) form a helical membrane-spanning segment. Topologically, residues 43-54 (LTPMAQDLGISE) are periplasmic. A helical membrane pass occupies residues 55–75 (GVAGQSVTVTAFVAMFSSLFI). The Cytoplasmic segment spans residues 76-85 (TQIIQATDRR). The chain crosses the membrane as a helical span at residues 86-106 (YIVILFAVLLTASCLMVSFAN). Position 107 (Ser107) is a topological domain, periplasmic. A helical membrane pass occupies residues 108 to 128 (FTLLLLGRACLGLALGGFWAM). Topologically, residues 129 to 147 (SASLTMRLVPARTVPKALS) are cytoplasmic. A helical transmembrane segment spans residues 148 to 168 (VIFGAVSIALVIAAPLGSFLG). At 169-175 (GIIGWRN) the chain is on the periplasmic side. A helical transmembrane segment spans residues 176–196 (VFNAAAVMGVLCVIWVVKSLP). At 197–215 (SLPGEPSHQKQNMFSLLQR) the chain is on the cytoplasmic side. Residues 216-236 (PGVMAGMIAIFMSFAGQFAFF) form a helical membrane-spanning segment. Over 237 to 255 (TYIRPVYMNLAGFDVDGLT) the chain is Periplasmic. A helical transmembrane segment spans residues 256–276 (LVLLSFGIASFVGTSFSSYVL). The Cytoplasmic segment spans residues 277–281 (KRSVK). The chain crosses the membrane as a helical span at residues 282 to 302 (LALAGAPLLLALSALTLIVWG). Over 303 to 305 (SDK) the chain is Periplasmic. Residues 306-326 (TVAAVIAIIWGLAFALVPVGW) form a helical membrane-spanning segment. Over 327–343 (STWITRSLADQAEKAGS) the chain is Cytoplasmic. A helical membrane pass occupies residues 344–364 (IQVAVIQLANTCGAAVGGYAL). Topologically, residues 365-366 (DN) are periplasmic. A helical membrane pass occupies residues 367–387 (FGLLSPLALSGGLMLLTALVV). At 388–397 (AAKVRITPMS) the chain is on the cytoplasmic side.

Belongs to the major facilitator superfamily. DHA1 family. NepI (TC 2.A.1.2.26) subfamily.

The protein localises to the cell inner membrane. It carries out the reaction inosine(in) + H(+)(out) = inosine(out) + H(+)(in). It catalyses the reaction guanosine(in) + H(+)(out) = guanosine(out) + H(+)(in). In terms of biological role, involved in the efflux of purine ribonucleosides, such as inosine and guanosine. This is Purine ribonucleoside efflux pump NepI from Salmonella paratyphi B (strain ATCC BAA-1250 / SPB7).